The following is a 357-amino-acid chain: Beta-hexosaminidase (357 aa).

Substrate contacts are provided by residues D72, R80, R146, and 176 to 177; that span reads KH. The active-site Proton donor/acceptor is H189. The active-site Nucleophile is the D260.

It belongs to the glycosyl hydrolase 3 family. NagZ subfamily.

Its subcellular location is the cytoplasm. The enzyme catalyses Hydrolysis of terminal non-reducing N-acetyl-D-hexosamine residues in N-acetyl-beta-D-hexosaminides.. It functions in the pathway cell wall biogenesis; peptidoglycan recycling. In terms of biological role, plays a role in peptidoglycan recycling by cleaving the terminal beta-1,4-linked N-acetylglucosamine (GlcNAc) from peptide-linked peptidoglycan fragments, giving rise to free GlcNAc, anhydro-N-acetylmuramic acid and anhydro-N-acetylmuramic acid-linked peptides. In Hydrogenovibrio crunogenus (strain DSM 25203 / XCL-2) (Thiomicrospira crunogena), this protein is Beta-hexosaminidase.